Consider the following 326-residue polypeptide: Virulence factor CaO19.6688 (326 aa).

Disordered regions lie at residues 19-91 (FNSL…KLPS), 112-137 (EEDN…GTTK), 161-184 (NTTI…PSFP), 222-245 (NVGQ…NDLL), and 276-326 (YEYG…PKIK). 3 stretches are compositionally biased toward low complexity: residues 21–42 (SLKS…SSSS), 53–78 (NRNT…NTTP), and 117–137 (EQQL…GTTK).

Virulence factor involved in pathogen-host interaction. Modulates host pro-inflammatory cytokine interleukin-1 beta (IL1B) expression. The polypeptide is Virulence factor CaO19.6688 (Candida albicans (strain SC5314 / ATCC MYA-2876) (Yeast)).